Reading from the N-terminus, the 677-residue chain is Methionine--tRNA ligase (677 aa).

A 'HIGH' region motif is present at residues 14–24 (PYANGSIHLGH). Cysteine 145, cysteine 148, cysteine 158, and cysteine 161 together coordinate Zn(2+). Residues 331–335 (KMSKS) carry the 'KMSKS' region motif. Lysine 334 is an ATP binding site. The tRNA-binding domain maps to 575-677 (AFAAVDLRIA…SGAKPGQRVK (103 aa)).

The protein belongs to the class-I aminoacyl-tRNA synthetase family. MetG type 1 subfamily. In terms of assembly, homodimer. The cofactor is Zn(2+).

It localises to the cytoplasm. It carries out the reaction tRNA(Met) + L-methionine + ATP = L-methionyl-tRNA(Met) + AMP + diphosphate. In terms of biological role, is required not only for elongation of protein synthesis but also for the initiation of all mRNA translation through initiator tRNA(fMet) aminoacylation. The polypeptide is Methionine--tRNA ligase (Pseudomonas aeruginosa (strain LESB58)).